Here is a 687-residue protein sequence, read N- to C-terminus: Protein white (687 aa).

A disordered region spans residues 1 to 30; the sequence is MGQEDQELLIRGGSKHPSAEHLNNGDSGAA. Residues 1–419 lie on the Cytoplasmic side of the membrane; it reads MGQEDQELLI…FMQFRAVLWR (419 aa). One can recognise an ABC transporter domain in the interval 93 to 341; that stretch reads NRTRGLFCNE…FSYVGAQCPT (249 aa). Position 130-137 (130-137) interacts with ATP; the sequence is GSSGAGKT. A helical membrane pass occupies residues 420–440; sequence SWLSVLKEPLLVKVRLIQTTM. The Extracellular segment spans residues 441-460; sequence VAILIGLIFLGQQLTQVGVM. The chain crosses the membrane as a helical span at residues 461-481; it reads NINGAIFLFLTNMTFQNVFAT. Residues 482–497 are Cytoplasmic-facing; that stretch reads INVFTSELPVFMREAR. A helical transmembrane segment spans residues 498 to 518; the sequence is SRLYRCDTYFLGKTIAELPLF. Residues 519–531 lie on the Extracellular side of the membrane; the sequence is LTVPLVFTAIAYP. A helical membrane pass occupies residues 532–552; that stretch reads MIGLRAGVLHFFNCLALVTLV. At 553–568 the chain is on the cytoplasmic side; sequence ANVSTSFGYLISCASS. The helical transmembrane segment at 569–589 threads the bilayer; it reads STSMALSVGPPVIIPFLLFGG. Residues 590–644 lie on the Extracellular side of the membrane; sequence FFLNSGSVPVYLKWLSYLSWFRYANEGLLINQWADVEPGEISCTSSNTTCPSSGK. Asparagine 636 carries N-linked (GlcNAc...) asparagine glycosylation. A helical membrane pass occupies residues 645–665; that stretch reads VILETLNFSAADLPLDYVGLA. The Cytoplasmic portion of the chain corresponds to 666 to 675; it reads ILIVSFRVLA.

The protein belongs to the ABC transporter superfamily. ABCG family. Eye pigment precursor importer (TC 3.A.1.204) subfamily. In terms of assembly, may form a heterodimer with bw/brown. May form a heterodimer with st/scarlet. In terms of tissue distribution, expressed in the head (at protein level). Expressed in the eye, specifically in retina primary pigment cells, in the basement membrane of the base of secondary and tertiary pigment cells, and in retinula cells (at protein level). Expressed in the retina underlying lamina in the epithelial glia that surrounds the array of lamina cartridges (at protein level). Weakly expressed in photoreceptors, specifically in terminals of R1-R6, R7 and R8 (at protein level). Expressed at very low levels in medulla and central brain (at protein level). Expressed in principal cells of the Malpighian tubules.

It is found in the cytoplasmic vesicle membrane. The enzyme catalyses 3',5'-cyclic GMP(in) + ATP + H2O = 3',5'-cyclic GMP(out) + ADP + phosphate + H(+). It carries out the reaction guanine(out) + ATP + H2O = guanine(in) + ADP + phosphate + H(+). It catalyses the reaction riboflavin(in) + ATP + H2O = riboflavin(out) + ADP + phosphate + H(+). The catalysed reaction is (6S)-5,6,7,8-tetrahydrofolate(out) + ATP + H2O = (6S)-5,6,7,8-tetrahydrofolate(in) + ADP + phosphate + H(+). The enzyme catalyses L-tryptophan(out) + ATP + H2O = L-tryptophan(in) + ADP + phosphate + H(+). It carries out the reaction L-kynurenine(out) + ATP + H2O = L-kynurenine(in) + ADP + phosphate + H(+). It catalyses the reaction xanthine(out) + ATP + H2O = xanthine(in) + ADP + phosphate + H(+). In terms of biological role, ATP-dependent transporter of the ATP-binding cassette (ABC) family which transports various molecules including bioamines, neurotransmitters, metabolic intermediates and second messengers. In the eye, required for the transport of the eye red and brown pigment precursors, guanine and tryptophan, into pigment cell granules. Probably in association with bw/brown, involved in the transport of guanine. Probably in association with st/scarlet involved in the transport of kynurenine and probably tryptophan. Involved in the transport of kynurenine in pupal eyes. May play a role in histamine uptake by the lamina epithelial glia which surrounds photoreceptors R1-R6. In Malpighian tubules, involved in the transport of cGMP, guanine, xanthine, riboflavin, kynurenine and tryptophan. Probably in association with br/brown, involved in aging-induced intestinal stem cell proliferation in the midgut by regulating tetrahydrofolate transport. Probably in association with st/scarlet, plays a role in zinc storage granule biogenesis in Malpighian tubule principal epithelial cells. In Drosophila melanogaster (Fruit fly), this protein is Protein white.